Here is a 1439-residue protein sequence, read N- to C-terminus: Fanconi anemia group D2 protein (1439 aa).

Lys563 participates in a covalent cross-link: Glycyl lysine isopeptide (Lys-Gly) (interchain with G-Cter in ubiquitin).

This sequence belongs to the Fanconi anemia protein FANCD2 family. Homodimer; cannot be ubiquitinated and does not bind DNA. Part of a FANCI-FANCD2 heterodimeric complex that binds and scans dsDNA for DNA damage. Interacts directly with FANCE and FANCI. Interacts with USP1 and MEN1. The ubiquitinated form specifically interacts with BRCA1 and BLM. Both the nonubiquitinated and the monoubiquitinated forms interact with BRCA2; this interaction is mediated by phosphorylated FANCG and the complex also includes XCCR3. The ubiquitinated form specifically interacts with MTMR15/FAN1 (via UBZ-type zinc finger), leading to recruit MTMR15/FAN1 to sites of DNA damage. Interacts with DCLRE1B/Apollo. Interacts with POLN. Interacts with UHRF1 and UHRF2; these interactions promote FANCD2 activation. Post-translationally, monoubiquitinated on Lys-563 during S phase and upon genotoxic stress. Deubiquitinated by USP1 as cells enter G2/M, or once DNA repair is completed. Monoubiquitination prevents DNA release from the FANCI-FANCD2 complex. FANCD2 is only ubiquitinated in the FANCI-FANCD2 complex and the monoubiquitination of FANCD2 is promoted by phosphorylation of FANCI. In terms of processing, phosphorylated in response to various genotoxic stresses by ATM and/or ATR.

Its subcellular location is the nucleus. Its function is as follows. Required for maintenance of chromosomal stability. Promotes accurate and efficient pairing of homologs during meiosis. Involved in the repair of DNA double-strand breaks, both by homologous recombination and single-strand annealing. The FANCI-FANCD2 complex binds and scans double-stranded DNA (dsDNA) for DNA damage; this complex stalls at DNA junctions between double-stranded DNA and single-stranded DNA. May participate in S phase and G2 phase checkpoint activation upon DNA damage. Plays a role in preventing breakage and loss of missegregating chromatin at the end of cell division, particularly after replication stress. Required for the targeting, or stabilization, of BLM to non-centromeric abnormal structures induced by replicative stress. Promotes BRCA2/FANCD1 loading onto damaged chromatin. May also be involved in B-cell immunoglobulin isotype switching. This is Fanconi anemia group D2 protein from Gallus gallus (Chicken).